The primary structure comprises 264 residues: ECF RNA polymerase sigma factor BldN (264 aa).

The segment at 1 to 87 (MYPHVGVDAS…PAADSDSARM (87 aa)) is not required for transcription in vitro. The disordered stretch occupies residues 64–83 (RSSSSGAAATTHRRPAADSD). Residues 105-172 (LYDQYSDTVY…LVADHFKSSR (68 aa)) are sigma-70 factor domain-2. Residues 129 to 132 (DLTS) carry the Polymerase core binding motif. The interval 204 to 255 (ALLDAVRRLNPQQQECVTLRFLQGLSVAETARVMGKNEGAIKTLQYRAVRTL) is sigma-70 factor domain-4.

Belongs to the sigma-70 factor family. ECF subfamily. In terms of processing, two forms of protein exist; a 35 kDa form in early growth and a 28 kDa form seen in later stages (at protein level). In liquid culture the larger form accumulates to higher level than on solid media. The shorter form results from processing just upstream of Met-87; the exact position is unknown. There are 4 possible start codons; mutation of the first prevents protein production while mutation of the other 3 (Val-44, Met-87 and Met-88) permits production of both forms. Introduction of stop codons between the first and second, or second and third possible start codons also prevents protein production, corroborating that the annotated start codon is the correct one.

In terms of biological role, sigma factors are initiation factors that promote the attachment of RNA polymerase to specific initiation sites and are then released. Extracytoplasmic function (ECF) sigma factors are usually held in an inactive form by an anti-sigma factor until released. ECF sigma factor involved in aerial mycelium formation, required for translation from the bldMp1 promoter. Expressed as a preprotein; processing and accumulation of the mature protein starts as aerial mycelium formation and sporulation commence. Activates expression of about 17 genes, including those for rdlA and most of the chaplins (chpA to chpH); chaplin activation is indirect. The sequence is that of ECF RNA polymerase sigma factor BldN from Streptomyces coelicolor (strain ATCC BAA-471 / A3(2) / M145).